The sequence spans 265 residues: 5'-nucleotidase SurE (265 aa).

A divalent metal cation contacts are provided by aspartate 8, aspartate 9, serine 40, and asparagine 98.

It belongs to the SurE nucleotidase family. The cofactor is a divalent metal cation.

It localises to the cytoplasm. The catalysed reaction is a ribonucleoside 5'-phosphate + H2O = a ribonucleoside + phosphate. Its function is as follows. Nucleotidase that shows phosphatase activity on nucleoside 5'-monophosphates. The polypeptide is 5'-nucleotidase SurE (Thermosynechococcus vestitus (strain NIES-2133 / IAM M-273 / BP-1)).